The sequence spans 302 residues: Ornithine carbamoyltransferase (302 aa).

Carbamoyl phosphate contacts are provided by residues 52–55 (STRT), Gln-79, Arg-103, and 130–133 (HPCQ). L-ornithine-binding positions include Asn-161, Asp-221, and 225–226 (SM). Carbamoyl phosphate contacts are provided by residues 261-262 (CL) and Arg-289.

This sequence belongs to the aspartate/ornithine carbamoyltransferase superfamily. OTCase family.

The protein localises to the cytoplasm. It carries out the reaction carbamoyl phosphate + L-ornithine = L-citrulline + phosphate + H(+). Its pathway is amino-acid biosynthesis; L-arginine biosynthesis; L-arginine from L-ornithine and carbamoyl phosphate: step 1/3. Its function is as follows. Reversibly catalyzes the transfer of the carbamoyl group from carbamoyl phosphate (CP) to the N(epsilon) atom of ornithine (ORN) to produce L-citrulline. The chain is Ornithine carbamoyltransferase from Syntrophotalea carbinolica (strain DSM 2380 / NBRC 103641 / GraBd1) (Pelobacter carbinolicus).